Reading from the N-terminus, the 200-residue chain is MQLNVNDAQAIEVSELTFGGEFNETLVHQAVVAYMAGGRQGSKQQKTRSDVRGGGKRPWRQKGTGRARAGTIRSPIWRGGGTTFAARPQDHSQKLNKKMYRAAMRSILAELVRTDRLVVVQDFAVETPKTKDLLGKLNNMSLTDVLIVSDAVDQNLYLAARNLPHVDVRDVQGSDPVSLIAYDKVLITVSAVKKFEELLG.

The tract at residues 38–68 (GRQGSKQQKTRSDVRGGGKRPWRQKGTGRAR) is disordered. A compositionally biased stretch (basic residues) spans 54–65 (GGKRPWRQKGTG).

This sequence belongs to the universal ribosomal protein uL4 family. As to quaternary structure, part of the 50S ribosomal subunit.

In terms of biological role, one of the primary rRNA binding proteins, this protein initially binds near the 5'-end of the 23S rRNA. It is important during the early stages of 50S assembly. It makes multiple contacts with different domains of the 23S rRNA in the assembled 50S subunit and ribosome. Functionally, forms part of the polypeptide exit tunnel. This is Large ribosomal subunit protein uL4 from Pseudomonas fluorescens (strain Pf0-1).